Consider the following 203-residue polypeptide: uncharacterized protein (203 aa).

An N-terminal signal peptide occupies residues 1-31 (MKKTFVKKAMLTTAAMTSAALLTFGPDAASA).

This is an uncharacterized protein from Bacillus subtilis (strain 168).